Reading from the N-terminus, the 635-residue chain is Extracellular metalloproteinase 1 (635 aa).

An N-terminal signal peptide occupies residues 1-19 (MHGLLLAAGLLSLPLHVLA). The propeptide occupies 20–246 (HPQPSTSTSL…VHNVVDYVAH (227 aa)). Asparagine 287 is a glycosylation site (N-linked (GlcNAc...) asparagine). Position 430 (histidine 430) interacts with Zn(2+). Residue glutamate 431 is part of the active site. Histidine 434 serves as a coordination point for Zn(2+). N-linked (GlcNAc...) asparagine glycans are attached at residues asparagine 475, asparagine 594, and asparagine 623.

It belongs to the peptidase M36 family. Zn(2+) serves as cofactor.

The protein localises to the secreted. In terms of biological role, secreted metalloproteinase probably acting as a virulence factor. In Arthroderma benhamiae (Trichophyton mentagrophytes), this protein is Extracellular metalloproteinase 1 (MEP1).